The primary structure comprises 44 residues: Large ribosomal subunit protein bL34 (44 aa).

It belongs to the bacterial ribosomal protein bL34 family.

The sequence is that of Large ribosomal subunit protein bL34 from Variovorax paradoxus (strain S110).